We begin with the raw amino-acid sequence, 74 residues long: Protein krueppel (74 aa).

4 consecutive C2H2-type zinc fingers follow at residues 1–4 (ERTH), 10–32 (FECP…MRLH), 38–60 (YHCS…LRVH), and 66–74 (YACELCDAR).

It belongs to the krueppel C2H2-type zinc-finger protein family.

The protein resides in the nucleus. In terms of biological role, krueppel is a gap class segmentation protein. This is Protein krueppel (Kr) from Psychoda cinerea (Psychod fly).